The primary structure comprises 466 residues: Putative transcription factor bHLH041 (466 aa).

Disordered regions lie at residues 108 to 129 (PANSDYLRPPHYPSSSSSSLSP), 194 to 213 (LTGPSSPPSTSSSPQRKGRA), and 260 to 289 (RENATTHGEGSGGSGGGGRYTSGPSATQLQ). Residues 120 to 129 (PSSSSSSLSP) are compositionally biased toward low complexity. Residues 268–279 (EGSGGSGGGGRY) are compositionally biased toward gly residues. Residues 285 to 334 (ATQLQHMISERKRREKLNESFQALRSLLPPGTKKDKASVLSIAREQLSSL) enclose the bHLH domain.

In terms of assembly, homodimer.

Its subcellular location is the nucleus. In Arabidopsis thaliana (Mouse-ear cress), this protein is Putative transcription factor bHLH041 (BHLH41).